A 764-amino-acid chain; its full sequence is G-type lectin S-receptor-like serine/threonine-protein kinase SD3-1 (764 aa).

A signal peptide spans 1–24; that stretch reads MKMLRALLLCLSLVFFLAFQIVVS. Bulb-type lectin domains are found at residues 25 to 151 and 154 to 279; these read EIQL…QSFG and TDTL…WKPV. Residues 25–442 are Extracellular-facing; sequence EIQLGSKLVV…TKSHSICIPC (418 aa). N-linked (GlcNAc...) asparagine glycans are attached at residues N92, N198, and N248. Positions 283-320 constitute an EGF-like; atypical domain; it reads VENQCRVFATCGSQVCSFNSSGYTECNCPFNAFVSVSD. 5 cysteine pairs are disulfide-bonded: C287/C298, C293/C308, C332/C413, C365/C388, and C369/C375. N-linked (GlcNAc...) asparagine glycans are attached at residues N301 and N353. Residues 332–413 form the Apple domain; it reads CKSGFNMVKF…LSSISYVKTC (82 aa). Residue N423 is glycosylated (N-linked (GlcNAc...) asparagine). Residues 443–463 traverse the membrane as a helical segment; it reads LVGATSTTLVLFLGFQLGIVV. The Cytoplasmic portion of the chain corresponds to 464-764; the sequence is YIYRRKKKLA…SESSQSLYEP (301 aa). The 299-residue stretch at 466–764 folds into the Protein kinase domain; that stretch reads YRRKKKLAKK…SESSQSLYEP (299 aa). ATP contacts are provided by residues 508–516 and K526; that span reads IGPQIFKGV. A caM-binding region spans residues 586-603; it reads LRSKKLTWRIRTDTCLSV. The interval 738-764 is disordered; sequence DPPPPPFACARSSPTNSSESSQSLYEP. Positions 749-764 are enriched in low complexity; it reads SSPTNSSESSQSLYEP.

It localises to the cell membrane. The catalysed reaction is L-seryl-[protein] + ATP = O-phospho-L-seryl-[protein] + ADP + H(+). The enzyme catalyses L-threonyl-[protein] + ATP = O-phospho-L-threonyl-[protein] + ADP + H(+). This is G-type lectin S-receptor-like serine/threonine-protein kinase SD3-1 (SD31) from Arabidopsis thaliana (Mouse-ear cress).